Here is a 35-residue protein sequence, read N- to C-terminus: Small toxic polypeptide LdrA (35 aa).

The chain crosses the membrane as a helical span at residues 8 to 28 (MIFWHDLAAPILAGIITAAIV).

The protein belongs to the Ldr toxic peptide family.

The protein localises to the cell inner membrane. Toxic component of a type I toxin-antitoxin (TA) system. Inhibits ATP synthesis possibly due to its insertion in the cell inner membrane, ATP levels drop over 50% 2 minutes after induction. Overexpression is toxic leading to cell death, it inhibits cell growth within 30 minutes; C-terminally tagged versions of the protein are toxic while N-terminally tagged versions are not. The sequence is that of Small toxic polypeptide LdrA (ldrA) from Escherichia coli (strain K12).